Consider the following 340-residue polypeptide: Central glycolytic genes regulator (340 aa).

The segment at residues 37–56 (RRSLSASLGISERVLRGEVQ) is a DNA-binding region (H-T-H motif). Residues 149 to 152 (GGTT), R175, Q185, 250 to 251 (RR), E269, and K310 each bind beta-D-fructose 1,6-bisphosphate.

It belongs to the SorC transcriptional regulatory family. As to quaternary structure, homotetramer. Binds primarily as a dimer to each half-site of the full-length operator, with much higher affinity for the right site. Then, both dimers interact, bridging the two-half sites of the operator region.

Stability and function are regulated by the effector molecule fructose-1,6-bisphosphate (FBP). In the presence of glucose, binding of FBP to the low-affinity sugar-binding site of CggR disrupts dimer/dimer bridging interactions and triggers a tetramer to dimer transition, which leaves two physically independent dimers on the target DNA and allows transcription of the downstream coding sequences by the RNA polymerase. In addition, FBP and several other phosphorylated compounds can bind to a high-affinity binding-site and protect CggR against aggregation and proteolysis. In terms of biological role, in the absence of glucose, represses the transcription of the gapA operon, which encodes five key glycolytic enzymes. Binds specifically to the cggR-gapA promoter region and blocks the progression of the RNA polymerase, leading to the arrest of the transcription. The polypeptide is Central glycolytic genes regulator (cggR) (Bacillus subtilis (strain 168)).